The primary structure comprises 287 residues: ATP synthase gamma chain (287 aa).

Belongs to the ATPase gamma chain family. In terms of assembly, F-type ATPases have 2 components, CF(1) - the catalytic core - and CF(0) - the membrane proton channel. CF(1) has five subunits: alpha(3), beta(3), gamma(1), delta(1), epsilon(1). CF(0) has three main subunits: a, b and c.

The protein resides in the cell inner membrane. Its function is as follows. Produces ATP from ADP in the presence of a proton gradient across the membrane. The gamma chain is believed to be important in regulating ATPase activity and the flow of protons through the CF(0) complex. The protein is ATP synthase gamma chain of Salmonella gallinarum (strain 287/91 / NCTC 13346).